Consider the following 552-residue polypeptide: HTH-type transcriptional regulator SgrR (552 aa).

Positions 1–116 constitute an HTH marR-type domain; that stretch reads MPSARLQQQF…LVSHLGRSFR (116 aa). The H-T-H motif DNA-binding region spans 26–49; it reads LNELAALLSCSRRHMRTLLNTMQD. The segment at 163-492 is solute-binding; the sequence is ELEADIAHHW…IDWQADAARW (330 aa).

In terms of biological role, activates the small RNA gene sgrS under glucose-phosphate stress conditions as well as yfdZ. Represses its own transcription under both stress and non-stress conditions. Might act as a sensor of the intracellular accumulation of phosphoglucose by binding these molecules in its C-terminal solute-binding domain. This chain is HTH-type transcriptional regulator SgrR, found in Shigella dysenteriae serotype 1 (strain Sd197).